We begin with the raw amino-acid sequence, 199 residues long: NAD(P)H dehydrogenase (quinone) (199 aa).

Positions 4-190 (VLVLYYSSYG…AMARFQGGHV (187 aa)) constitute a Flavodoxin-like domain. Residues 10-15 (SSYGHI) and 78-80 (TRF) each bind FMN. Tyr-12 provides a ligand contact to NAD(+). Trp-98 contributes to the substrate binding site. Residues 113 to 119 (STATQHG) and His-134 each bind FMN.

This sequence belongs to the WrbA family. The cofactor is FMN.

It carries out the reaction a quinone + NADH + H(+) = a quinol + NAD(+). It catalyses the reaction a quinone + NADPH + H(+) = a quinol + NADP(+). The chain is NAD(P)H dehydrogenase (quinone) from Azoarcus sp. (strain BH72).